Here is a 455-residue protein sequence, read N- to C-terminus: N-acetyl-S-(2-succino)cysteine lyase (455 aa).

Residue 106–107 (TT) participates in fumarate binding. His-154 serves as the catalytic Proton donor/acceptor. Arg-233 contributes to the fumarate binding site. Ser-277 acts as the Proton donor/acceptor in catalysis. Residues Ser-278 and 283–285 (KRN) contribute to the fumarate site.

Belongs to the lyase 1 family.

The enzyme catalyses N-acetyl-S-(2-succino)-L-cysteine = N-acetyl-L-cysteine + fumarate. It participates in amino-acid biosynthesis; L-cysteine biosynthesis. Functionally, catalyzes the cleavage of N-acetyl-S-(2-succino)cysteine into fumarate and N-acetylcysteine. Is involved in a S-(2-succino)cysteine (2SC) degradation pathway that allows the bacterium to recover cysteine from 2SC and to detoxify 2SC that may be a toxic metabolite. Can also perform the reverse reaction in vitro, and has minor activity against 2SC and other small molecule thiols. In Enterococcus italicus (strain DSM 15952 / CCUG 50447 / LMG 22039 / TP 1.5), this protein is N-acetyl-S-(2-succino)cysteine lyase.